The sequence spans 386 residues: GTPase Obg (386 aa).

One can recognise an Obg domain in the interval 1–159 (MKFVDEAKIK…RNLLLELLLL (159 aa)). The 174-residue stretch at 160–333 (ADVGMLGLPN…LCRDVVEYLE (174 aa)) folds into the OBG-type G domain. GTP is bound by residues 166-173 (GLPNAGKS), 191-195 (FTTLV), 213-216 (DIPG), 283-286 (NKTD), and 314-316 (AAI). Residues Ser-173 and Thr-193 each contribute to the Mg(2+) site.

Belongs to the TRAFAC class OBG-HflX-like GTPase superfamily. OBG GTPase family. Monomer. Mg(2+) serves as cofactor.

Its subcellular location is the cytoplasm. Functionally, an essential GTPase which binds GTP, GDP and possibly (p)ppGpp with moderate affinity, with high nucleotide exchange rates and a fairly low GTP hydrolysis rate. Plays a role in control of the cell cycle, stress response, ribosome biogenesis and in those bacteria that undergo differentiation, in morphogenesis control. This chain is GTPase Obg, found in Psychromonas ingrahamii (strain DSM 17664 / CCUG 51855 / 37).